The following is a 448-amino-acid chain: Glucose-6-phosphate isomerase (448 aa).

Glu290 serves as the catalytic Proton donor. Catalysis depends on residues His311 and Lys425.

This sequence belongs to the GPI family.

It is found in the cytoplasm. It carries out the reaction alpha-D-glucose 6-phosphate = beta-D-fructose 6-phosphate. It functions in the pathway carbohydrate biosynthesis; gluconeogenesis. It participates in carbohydrate degradation; glycolysis; D-glyceraldehyde 3-phosphate and glycerone phosphate from D-glucose: step 2/4. In terms of biological role, catalyzes the reversible isomerization of glucose-6-phosphate to fructose-6-phosphate. The chain is Glucose-6-phosphate isomerase from Latilactobacillus sakei subsp. sakei (strain 23K) (Lactobacillus sakei subsp. sakei).